Here is a 366-residue protein sequence, read N- to C-terminus: MSHNTFGHLFRVTTWGESHGEALGCVIDGCPPGITFTLSDIQSYLNKRKPGQSKYTTQRRELDQVEILSGVIVQDDGITFVTTGTPISLLIRNMDQRSKDYSAIVHQYRPGHADYTYDVKYGIRDFRGGGRASARETAARVAAGAVARKIIPGVIVRGAVIAIGPHTINRNRWNWSEVDNNPFFTPDAEMVQVFSDYIDKVHKNGSSVGAVVEIVAENIPAGLGAPIYAKLDQDIASLLMSINAVKGVEIGDGFAAARLTGEENADEMRMGSDGKPLFLSNHAGGIVGGISSGQPIIARFAVKPTSSILIPRRSIDVDGNDVNVITKGRHDPCVGIRAVPVGEAMVACALADHYLRHRGQVGCFKR.

Arg-48 provides a ligand contact to NADP(+). FMN-binding positions include 131-133, 243-244, Gly-288, 303-307, and Arg-329; these read RAS, NA, and KPTSS.

This sequence belongs to the chorismate synthase family. Homotetramer. Requires FMNH2 as cofactor.

The catalysed reaction is 5-O-(1-carboxyvinyl)-3-phosphoshikimate = chorismate + phosphate. It functions in the pathway metabolic intermediate biosynthesis; chorismate biosynthesis; chorismate from D-erythrose 4-phosphate and phosphoenolpyruvate: step 7/7. Its function is as follows. Catalyzes the anti-1,4-elimination of the C-3 phosphate and the C-6 proR hydrogen from 5-enolpyruvylshikimate-3-phosphate (EPSP) to yield chorismate, which is the branch point compound that serves as the starting substrate for the three terminal pathways of aromatic amino acid biosynthesis. This reaction introduces a second double bond into the aromatic ring system. This chain is Chorismate synthase, found in Bartonella henselae (strain ATCC 49882 / DSM 28221 / CCUG 30454 / Houston 1) (Rochalimaea henselae).